The following is a 337-amino-acid chain: GTPase Obg (337 aa).

An Obg domain is found at 1–159; sequence MKFVDSASIF…LMLNMELKLM (159 aa). Positions 160-323 constitute an OBG-type G domain; sequence ADVGLVGFPN…LKDELWREVS (164 aa). GTP is bound by residues 166 to 173, 191 to 195, 213 to 216, 280 to 283, and 304 to 306; these read GFPNAGKS, FTTLV, DIPG, TKMD, and SAV. The Mg(2+) site is built by Ser173 and Thr193.

It belongs to the TRAFAC class OBG-HflX-like GTPase superfamily. OBG GTPase family. In terms of assembly, monomer. The cofactor is Mg(2+).

The protein localises to the cytoplasm. An essential GTPase which binds GTP, GDP and possibly (p)ppGpp with moderate affinity, with high nucleotide exchange rates and a fairly low GTP hydrolysis rate. Plays a role in control of the cell cycle, stress response, ribosome biogenesis and in those bacteria that undergo differentiation, in morphogenesis control. This chain is GTPase Obg, found in Pelodictyon phaeoclathratiforme (strain DSM 5477 / BU-1).